The sequence spans 81 residues: ATP synthase subunit c (81 aa).

The next 2 membrane-spanning stretches (helical) occupy residues 7 to 27 (LVAI…AIGF) and 55 to 75 (IAGL…FFIF).

Belongs to the ATPase C chain family. As to quaternary structure, F-type ATPases have 2 components, F(1) - the catalytic core - and F(0) - the membrane proton channel. F(1) has five subunits: alpha(3), beta(3), gamma(1), delta(1), epsilon(1). F(0) has three main subunits: a(1), b(2) and c(10-14). The alpha and beta chains form an alternating ring which encloses part of the gamma chain. F(1) is attached to F(0) by a central stalk formed by the gamma and epsilon chains, while a peripheral stalk is formed by the delta and b chains.

It is found in the cell inner membrane. Its function is as follows. F(1)F(0) ATP synthase produces ATP from ADP in the presence of a proton or sodium gradient. F-type ATPases consist of two structural domains, F(1) containing the extramembraneous catalytic core and F(0) containing the membrane proton channel, linked together by a central stalk and a peripheral stalk. During catalysis, ATP synthesis in the catalytic domain of F(1) is coupled via a rotary mechanism of the central stalk subunits to proton translocation. Functionally, key component of the F(0) channel; it plays a direct role in translocation across the membrane. A homomeric c-ring of between 10-14 subunits forms the central stalk rotor element with the F(1) delta and epsilon subunits. The protein is ATP synthase subunit c of Acinetobacter baumannii (strain ACICU).